Consider the following 718-residue polypeptide: Catalase-peroxidase (718 aa).

Positions 92 to 220 form a cross-link, tryptophyl-tyrosyl-methioninium (Trp-Tyr) (with M-246); sequence WHAAGTYRTA…LASVMMGLIY (129 aa). The active-site Proton acceptor is histidine 93. Residues 220–246 constitute a cross-link (tryptophyl-tyrosyl-methioninium (Tyr-Met) (with W-92)); that stretch reads YVNPEGVDGHPDPLKTANDVRVTFERM. Histidine 261 lines the heme b pocket.

It belongs to the peroxidase family. Peroxidase/catalase subfamily. Homodimer or homotetramer. Heme b is required as a cofactor. In terms of processing, formation of the three residue Trp-Tyr-Met cross-link is important for the catalase, but not the peroxidase activity of the enzyme.

It carries out the reaction H2O2 + AH2 = A + 2 H2O. It catalyses the reaction 2 H2O2 = O2 + 2 H2O. Functionally, bifunctional enzyme with both catalase and broad-spectrum peroxidase activity. The polypeptide is Catalase-peroxidase (Shewanella halifaxensis (strain HAW-EB4)).